A 73-amino-acid chain; its full sequence is Translation initiation factor IF-1 (73 aa).

The region spanning 1-73 is the S1-like domain; sequence MANKEELIEF…TKGRITYRAR (73 aa).

Belongs to the IF-1 family. As to quaternary structure, component of the 30S ribosomal translation pre-initiation complex which assembles on the 30S ribosome in the order IF-2 and IF-3, IF-1 and N-formylmethionyl-tRNA(fMet); mRNA recruitment can occur at any time during PIC assembly.

The protein localises to the cytoplasm. One of the essential components for the initiation of protein synthesis. Stabilizes the binding of IF-2 and IF-3 on the 30S subunit to which N-formylmethionyl-tRNA(fMet) subsequently binds. Helps modulate mRNA selection, yielding the 30S pre-initiation complex (PIC). Upon addition of the 50S ribosomal subunit IF-1, IF-2 and IF-3 are released leaving the mature 70S translation initiation complex. The polypeptide is Translation initiation factor IF-1 (Acinetobacter baumannii (strain ATCC 17978 / DSM 105126 / CIP 53.77 / LMG 1025 / NCDC KC755 / 5377)).